The chain runs to 366 residues: Putative transcription factor PHD1 (366 aa).

Residues arginine 186–arginine 292 form the HTH APSES-type domain. A DNA-binding region (H-T-H motif) is located at residues glycine 220–glutamate 241. Residues proline 294–serine 366 form a disordered region. Basic and acidic residues predominate over residues glutamate 312–serine 328.

This sequence belongs to the EFG1/PHD1/stuA family.

The protein localises to the nucleus. In terms of biological role, putative transcription factor that functions in pseudohyphal growth. The sequence is that of Putative transcription factor PHD1 (PHD1) from Saccharomyces cerevisiae (strain ATCC 204508 / S288c) (Baker's yeast).